We begin with the raw amino-acid sequence, 94 residues long: Large ribosomal subunit protein uL22 (94 aa).

Belongs to the universal ribosomal protein uL22 family. Part of the 50S ribosomal subunit.

Its function is as follows. This protein binds specifically to 23S rRNA; its binding is stimulated by other ribosomal proteins, e.g. L4, L17, and L20. It is important during the early stages of 50S assembly. It makes multiple contacts with different domains of the 23S rRNA in the assembled 50S subunit and ribosome. In terms of biological role, the globular domain of the protein is located near the polypeptide exit tunnel on the outside of the subunit, while an extended beta-hairpin is found that lines the wall of the exit tunnel in the center of the 70S ribosome. The chain is Large ribosomal subunit protein uL22 (rplV) from Tomato big bud phytoplasma.